The sequence spans 264 residues: uncharacterized protein (264 aa).

Disordered regions lie at residues 1 to 52 and 123 to 207; these read MPRS…AVPG and GGRW…PWTR. Residues 29-40 show a composition bias toward low complexity; the sequence is AAHPTTSPTAAS. The span at 144 to 154 shows a compositional bias: polar residues; the sequence is HFQSSGAQQES. Basic residues predominate over residues 188–197; that stretch reads ARKSACKCPR.

This is an uncharacterized protein from Homo sapiens (Human).